Reading from the N-terminus, the 443-residue chain is Probable glycine dehydrogenase (decarboxylating) subunit 1 (443 aa).

It belongs to the GcvP family. N-terminal subunit subfamily. In terms of assembly, the glycine cleavage system is composed of four proteins: P, T, L and H. In this organism, the P 'protein' is a heterodimer of two subunits.

The catalysed reaction is N(6)-[(R)-lipoyl]-L-lysyl-[glycine-cleavage complex H protein] + glycine + H(+) = N(6)-[(R)-S(8)-aminomethyldihydrolipoyl]-L-lysyl-[glycine-cleavage complex H protein] + CO2. Its function is as follows. The glycine cleavage system catalyzes the degradation of glycine. The P protein binds the alpha-amino group of glycine through its pyridoxal phosphate cofactor; CO(2) is released and the remaining methylamine moiety is then transferred to the lipoamide cofactor of the H protein. The protein is Probable glycine dehydrogenase (decarboxylating) subunit 1 of Oleidesulfovibrio alaskensis (strain ATCC BAA-1058 / DSM 17464 / G20) (Desulfovibrio alaskensis).